A 185-amino-acid chain; its full sequence is Elongation factor P (185 aa).

This sequence belongs to the elongation factor P family.

It localises to the cytoplasm. It participates in protein biosynthesis; polypeptide chain elongation. In terms of biological role, involved in peptide bond synthesis. Stimulates efficient translation and peptide-bond synthesis on native or reconstituted 70S ribosomes in vitro. Probably functions indirectly by altering the affinity of the ribosome for aminoacyl-tRNA, thus increasing their reactivity as acceptors for peptidyl transferase. In Cyanothece sp. (strain PCC 7425 / ATCC 29141), this protein is Elongation factor P.